The primary structure comprises 520 residues: Zinc finger and BTB domain-containing protein 18 (520 aa).

In terms of domain architecture, BTB spans 24-91; it reads CDCTVLVGDA…MYEGILQFKG (68 aa). Residues 121-140 are disordered; sequence ATTDSTKKEEDTSSFSDKVE. 4 consecutive C2H2-type zinc fingers follow at residues 368–390, 408–430, 436–458, and 464–487; these read FMCP…LSTH, PTCS…ERTH, YTCT…AVVH, and HACK…RKFH.

Belongs to the krueppel C2H2-type zinc-finger protein family. ZBTB18 subfamily.

It is found in the nucleus. Functionally, transcriptional repressor that plays a role in various developmental processes. Specifically binds the consensus DNA sequence 5'-[AC]ACATCTG[GT][AC]-3' which contains the E box core, and acts by recruiting chromatin remodeling multiprotein complexes. This is Zinc finger and BTB domain-containing protein 18 (zbtb18) from Xenopus laevis (African clawed frog).